The primary structure comprises 221 residues: NADH-ubiquinone oxidoreductase chain 4 (221 aa).

6 helical membrane-spanning segments follow: residues Tyr5 to Leu25, Ile34 to Ile54, Ile61 to Ile81, Ile100 to Leu120, Ile140 to Tyr160, and Phe185 to Ile205.

It belongs to the complex I subunit 4 family.

The protein resides in the mitochondrion membrane. It catalyses the reaction a ubiquinone + NADH + 5 H(+)(in) = a ubiquinol + NAD(+) + 4 H(+)(out). Functionally, core subunit of the mitochondrial membrane respiratory chain NADH dehydrogenase (Complex I) that is believed to belong to the minimal assembly required for catalysis. Complex I functions in the transfer of electrons from NADH to the respiratory chain. The immediate electron acceptor for the enzyme is believed to be ubiquinone. This chain is NADH-ubiquinone oxidoreductase chain 4 (nd4), found in Emericella nidulans (Aspergillus nidulans).